A 138-amino-acid chain; its full sequence is ATP synthase epsilon chain (138 aa).

The protein belongs to the ATPase epsilon chain family. As to quaternary structure, F-type ATPases have 2 components, CF(1) - the catalytic core - and CF(0) - the membrane proton channel. CF(1) has five subunits: alpha(3), beta(3), gamma(1), delta(1), epsilon(1). CF(0) has three main subunits: a, b and c.

Its subcellular location is the cell inner membrane. Its function is as follows. Produces ATP from ADP in the presence of a proton gradient across the membrane. This chain is ATP synthase epsilon chain, found in Ruthia magnifica subsp. Calyptogena magnifica.